A 115-amino-acid polypeptide reads, in one-letter code: NADH-ubiquinone oxidoreductase chain 3 (115 aa).

Transmembrane regions (helical) follow at residues 4–24, 55–75, and 84–104; these read IVIL…AFWL, FFLI…LLPL, and TYFT…GLMY.

The protein belongs to the complex I subunit 3 family. Core subunit of respiratory chain NADH dehydrogenase (Complex I) which is composed of 45 different subunits. Interacts with TMEM186. Interacts with TMEM242.

Its subcellular location is the mitochondrion inner membrane. It catalyses the reaction a ubiquinone + NADH + 5 H(+)(in) = a ubiquinol + NAD(+) + 4 H(+)(out). In terms of biological role, core subunit of the mitochondrial membrane respiratory chain NADH dehydrogenase (Complex I) which catalyzes electron transfer from NADH through the respiratory chain, using ubiquinone as an electron acceptor. Essential for the catalytic activity of complex I. The chain is NADH-ubiquinone oxidoreductase chain 3 from Eligmodontia typus (Highland gerbil mouse).